A 163-amino-acid chain; its full sequence is Small ribosomal subunit protein uS3m (163 aa).

Residues 1–31 (MAASLIRQTKLLSVFSSAGCFRSIHSTAACL) constitute a mitochondrion transit peptide.

This sequence belongs to the universal ribosomal protein uS3 family. Component of the mitochondrial ribosome small subunit (28S) which comprises a 12S rRNA and about 30 distinct proteins.

It is found in the mitochondrion. This is Small ribosomal subunit protein uS3m (mrps24) from Danio rerio (Zebrafish).